The following is a 1252-amino-acid chain: MFKCPERVSVKKKEDILDLPNLIEIQIKSYKQFLQIGKLAEERDNIGLEEVFREIFPIKSYNEATILEYLSYNLGVPKYSPDECIRRGITYSVTLKVRFRLTDETGIKEEEVYMGTIPIMTDKGTFIINGAERVVVSQVHRSPGINFEQEKHSKGNILFSFRIIPYRGSWLEAIFDINDLIYIHIDRKKRRRKILAITFIRALGYSSDADIIEEFFQIEEHSLKSEKDFSFLVGKILADNVLDEASSLVYGKAGEKLSTAMLKRMLDANISTLKIAVEADENHPIIKMLAKDPTDSYEAALKDFYRRLRPGEPATLANARSTIMRLFFDPKRYNLGRVGRYKLNRKLGFPMDEESLAQVTLRKEDVIGALKYLIRLKMGDEKASIDDIDHLANRRVRSVGELIQNQCRSGLARMEKIIRERMNLFDFSSDTLIPGKIISAKGLASVLKDFFGRSQLSQFMDQTNPVAELTHKRRLSALGPGGLNRERAGFEVRDVHASHYGRICPIETPEGPNIGLITSLSSFAKINEFGFIETPYRIVRDGVVTDEIEYMTADVEEECVIAQASANLDEYNMFVDPVCWARYRGEAFEADTSTVTHMDVSPKQLVSIVTGLIPFLEHDDANRALMGSNMQRQAVPLLKTEAPIVGTGLEARAAKDSGAIVVAEEDGVVEYVDGYKVVIAAKHHPTLKRTYDLKKFLRSNSGTCINQRPLCSVGDVVVKGDVIADGPATDKGELALGKNILVAFMPWYGYNFEDAIIISEKLIKQDAYTSIYIEEFELTARDTKLGKEEITRDIPNVSEEVLANLGEDGIIRIGAEVKPGDILVGKITPKSETELAPEERLLRAIFGEKAADVKDASLTVPPGTEGVVMDVKVFSRKDRLSKSDDELVEEAVHLKDLQKGYKNQISVLKIEYREKLGALLLNEKAPASIIHRRTADILVQEGTVFDQETIELLEQESLVDLLMPPCDMYDVLKSLLSDYETSLQRLEVNYKTEVEHIREGDADLDHGVIRQVKVYVASKRKLQVGDKMAGRHGNKGVVSKIVPEADMPYLANGETVQMILNPLGVPSRMNLGQVLETHLGYAAKTAGIHVKTPVFEGFPESRIWDMMIEQGLPADGKSYLYDGKTGERFDNTVVIGYIYMLKLSHLIADKIHARSIGPYSLVTQQPLGGKAQMGGQRFGEMEVWALEAYGVAHMLQEILTVKSDDVTGRTRIYESIVKGENLLKSGTPESFNVLIKEMQGLGLDVRPMVVDA.

This sequence belongs to the RNA polymerase beta chain family. As to quaternary structure, the RNAP catalytic core consists of 2 alpha, 1 beta, 1 beta' and 1 omega subunit. When a sigma factor is associated with the core the holoenzyme is formed, which can initiate transcription.

The catalysed reaction is RNA(n) + a ribonucleoside 5'-triphosphate = RNA(n+1) + diphosphate. Functionally, DNA-dependent RNA polymerase catalyzes the transcription of DNA into RNA using the four ribonucleoside triphosphates as substrates. In Chlamydia abortus (strain DSM 27085 / S26/3) (Chlamydophila abortus), this protein is DNA-directed RNA polymerase subunit beta.